The primary structure comprises 376 residues: Zinc transporter 7 (376 aa).

Residues 1–37 are Cytoplasmic-facing; sequence MLPLSIKDDEYKPPKFNLFRKISGWFRSILSDKTSRN. Residues 38–58 form a helical membrane-spanning segment; sequence LFFFLCLNLSFAFVELLYGIW. At 59–67 the chain is on the lumenal side; the sequence is SNCLGLISD. A helical transmembrane segment spans residues 68–88; the sequence is SFHMFFDSTAILAGLAASVIS. The Cytoplasmic portion of the chain corresponds to 89 to 102; that stretch reads KWRDNDAFSYGYVR. Residues 103–123 form a helical membrane-spanning segment; sequence AEVLAGFVNGLFLIFTAFFIF. The Lumenal segment spans residues 124–140; the sequence is SEGVERALAPPDVHHER. Residues 141–161 traverse the membrane as a helical segment; it reads LLLVSILGFVVNLVGIFVFKH. The his-rich loop stretch occupies residues 161-218; sequence HGGHGHSHGSGHGHSHSLFNGALDQTHGHGDHCHSHELKHGAAHSHDHAHGHGHFHSH. The Cytoplasmic portion of the chain corresponds to 162–236; sequence GGHGHSHGSG…TGPSRQILQG (75 aa). Positions 188-222 are enriched in basic and acidic residues; that stretch reads GHGDHCHSHELKHGAAHSHDHAHGHGHFHSHDGPS. Positions 188–226 are disordered; the sequence is GHGDHCHSHELKHGAAHSHDHAHGHGHFHSHDGPSLKET. A helical membrane pass occupies residues 237-257; that stretch reads VFLHILADTLGSIGVIASAIM. The Lumenal segment spans residues 258 to 262; that stretch reads MQNFG. Residues 263–283 form a helical membrane-spanning segment; that stretch reads LMIADPICSILIAMLIVISVI. Topologically, residues 284 to 376 are cytoplasmic; the sequence is PLLRESVGIL…LYVQIDFAAM (93 aa).

It belongs to the cation diffusion facilitator (CDF) transporter (TC 2.A.4) family. SLC30A subfamily. Homooligomer.

Its subcellular location is the golgi apparatus membrane. It is found in the cytoplasmic vesicle. The protein localises to the golgi apparatus. The protein resides in the trans-Golgi network. It localises to the sarcoplasmic reticulum. Its subcellular location is the mitochondrion. It carries out the reaction Zn(2+)(in) = Zn(2+)(out). Zinc ion transporter mediating zinc entry from the cytosol into the lumen of organelles along the secretory pathway. By contributing to zinc ion homeostasis within the early secretory pathway, regulates the activation and folding of enzymes like alkaline phosphatases. This is Zinc transporter 7 (SLC30A7) from Bos taurus (Bovine).